The chain runs to 326 residues: N-acetyl-gamma-glutamyl-phosphate reductase (326 aa).

Cysteine 155 is an active-site residue.

The protein belongs to the NAGSA dehydrogenase family. Type 1 subfamily.

Its subcellular location is the cytoplasm. The catalysed reaction is N-acetyl-L-glutamate 5-semialdehyde + phosphate + NADP(+) = N-acetyl-L-glutamyl 5-phosphate + NADPH + H(+). Its pathway is amino-acid biosynthesis; L-arginine biosynthesis; N(2)-acetyl-L-ornithine from L-glutamate: step 3/4. Catalyzes the NADPH-dependent reduction of N-acetyl-5-glutamyl phosphate to yield N-acetyl-L-glutamate 5-semialdehyde. The polypeptide is N-acetyl-gamma-glutamyl-phosphate reductase (Shewanella oneidensis (strain ATCC 700550 / JCM 31522 / CIP 106686 / LMG 19005 / NCIMB 14063 / MR-1)).